Here is a 3172-residue protein sequence, read N- to C-terminus: Erythronolide synthase EryA3 (3172 aa).

One can recognise a Ketosynthase family 3 (KS3) 1 domain in the interval 38–452; that stretch reads GEPIAIVGMA…GTNAHVIVEE (415 aa). 2 module regions span residues 41 to 1464 and 1492 to 2891; these read IAIV…DHYL and IAIV…DHIG. The Acyl-thioester intermediate; for beta-ketoacyl synthase 1 activity role is filled by Cys-199. Catalysis depends on for beta-ketoacyl synthase 1 activity residues His-334 and His-374. The tract at residues 557–874 is acyltransferase 1; it reads VFPGQGAQWQ…LGEAYAQGVE (318 aa). Ser-643 (acyl-ester intermediate; for acyltransferase 1 activity) is an active-site residue. A beta-ketoacyl reductase 1 region spans residues 1117 to 1294; sequence GTVLVTGGTG…VTSIAWGLWA (178 aa). NADP(+) contacts are provided by residues 1125–1128, 1148–1151, 1177–1178, Lys-1229, and 1249–1250; these read TGGI, GRRG, DV, and FS. The active-site Acyl-ester intermediate; for beta-ketoacyl reductase 1 activity is the Tyr-1264. The 76-residue stretch at 1392–1467 folds into the Carrier 1 domain; sequence EHLAHLIRAE…RLADHYLERL (76 aa). An O-(pantetheine 4'-phosphoryl)serine modification is found at Ser-1427. Residues 1489 to 1916 form the Ketosynthase family 3 (KS3) 2 domain; that stretch reads DDPIAIVGMA…GTNAHVIIAE (428 aa). Cys-1661 acts as the Acyl-thioester intermediate; for beta-ketoacyl synthase 2 activity in catalysis. Residues His-1797 and His-1837 each act as for beta-ketoacyl synthase 2 activity in the active site. The segment at 2022–2331 is acyltransferase 2; the sequence is VFVFPGQGAQ…LARAHVHGVA (310 aa). The active-site Acyl-ester intermediate; for acyltransferase 2 activity is Ser-2112. Positions 2557–2731 are beta-ketoacyl reductase 2; that stretch reads GTALVTGGTG…ATSVAWGAWA (175 aa). Residues 2565–2568, 2588–2591, 2617–2618, Lys-2666, and 2686–2687 each bind NADP(+); these read TGAL, SRRG, DV, and FS. Tyr-2701 serves as the catalytic Acyl-ester intermediate; for beta-ketoacyl reductase 2 activity. The Carrier 2 domain maps to 2819–2894; it reads QELLEFTHSH…RLADHIGQQL (76 aa). Residue Ser-2854 is modified to O-(pantetheine 4'-phosphoryl)serine. Residues 2960-3166 are thioesterase; sequence ICCAGTAAIS…DAIARHIDAW (207 aa). Thr-2965 contributes to the substrate binding site. The active-site Nucleophile; for thioesterase activity is Ser-3031. Residues Ala-3032 and Asp-3058 each contribute to the substrate site. The active-site Proton acceptor; for thioesterase activity is His-3148.

Homodimer. Erythronolide synthase is composed of EryAI, EryAII and EryAIII multimodular (2 modules) polypeptides each coding for a functional synthase subunit which participates in 2 of the six FAS-like elongation steps required for formation of the polyketide. Module 1, 2, 3, 4, 5, and 6 participating in biosynthesis steps 1, 2, 3, 4, 5, and 6, respectively. Requires pantetheine 4'-phosphate as cofactor.

The catalysed reaction is 6 (S)-methylmalonyl-CoA + propanoyl-CoA + 6 NADPH + 12 H(+) = 6-deoxyerythronolide B + 6 CO2 + 6 NADP(+) + 7 CoA + H2O. Its pathway is antibiotic biosynthesis; erythromycin biosynthesis. Its activity is regulated as follows. Inhibited by diphenyl phosphonates derivatives such as diphenyl allylphosphonate. Functionally, involved in the biosynthesis of antibiotic erythromycin via the biosynthesis of its aglycone precursor, 6-deoxyerythronolide B (6-dEB). This chain is Erythronolide synthase EryA3, found in Saccharopolyspora erythraea (Streptomyces erythraeus).